Reading from the N-terminus, the 30-residue chain is Agglutinin alpha-1 chain (30 aa).

Residues 1 to 30 (GVAFDDGSYTGIREINFEYNRETAIGGXQV) form the Jacalin-type lectin domain.

It belongs to the jacalin lectin family. Tetramer of four alpha chains associated with two or four beta chains.

Functionally, N-acetyl-galactosamine and D-galactose specific lectin. Binds the Tn-antigen structure GalNAc-alpha-1-O-Ser, the T-antigen structure Gal-beta1-3-GalNAc and IgA. The sequence is that of Agglutinin alpha-1 chain from Morus nigra (Black mulberry).